A 957-amino-acid polypeptide reads, in one-letter code: PE-PGRS family protein PE_PGRS3 (957 aa).

Positions 4-94 (VIAAPEVIAA…GAYAAAEAAA (91 aa)) constitute a PE domain. Basic residues predominate over residues 893–925 (CRRQRRADRQRRQRRQRRQSRGHARCRRHRRAA). Residues 893-957 (CRRQRRADRQ…GISCSPQMMP (65 aa)) are disordered.

Belongs to the mycobacterial PE family. PGRS subfamily. A cleavage of the protein removes the N-terminal 120-150 residues, immediately upstream the PGRS domain. The exact position of the cleavage site could not be identified.

It is found in the cell outer membrane. It localises to the secreted. The protein resides in the cell wall. Its subcellular location is the cell surface. Functionally, the arginine-rich C-terminal region protrudes from the mycobacterial membrane and mediates M.tuberculosis entry into host epithelial cells. May serve as a bridge between mycobacteria and host cells by interacting with specific host phospholipids and extracting them from host cells, for their direct integration or as a source of phosphate, during phases of TB pathogenesis when M.tuberculosis is short of phosphate supply. The chain is PE-PGRS family protein PE_PGRS3 from Mycobacterium tuberculosis (strain ATCC 25618 / H37Rv).